The following is a 501-amino-acid chain: Ribose import ATP-binding protein RbsA (501 aa).

ABC transporter domains follow at residues 8–245 (LKMV…VGRT) and 255–500 (VKKG…VGIN). ATP is bound at residue 40–47 (GENGAGKS).

It belongs to the ABC transporter superfamily. Ribose importer (TC 3.A.1.2.1) family. In terms of assembly, the complex is composed of an ATP-binding protein (RbsA), two transmembrane proteins (RbsC) and a solute-binding protein (RbsB).

Its subcellular location is the cell membrane. The catalysed reaction is D-ribose(out) + ATP + H2O = D-ribose(in) + ADP + phosphate + H(+). Functionally, part of the ABC transporter complex RbsABC involved in ribose import. Responsible for energy coupling to the transport system. This chain is Ribose import ATP-binding protein RbsA, found in Clostridium perfringens (strain SM101 / Type A).